We begin with the raw amino-acid sequence, 202 residues long: Probable nicotinate-nucleotide adenylyltransferase (202 aa).

The protein belongs to the NadD family.

The enzyme catalyses nicotinate beta-D-ribonucleotide + ATP + H(+) = deamido-NAD(+) + diphosphate. It functions in the pathway cofactor biosynthesis; NAD(+) biosynthesis; deamido-NAD(+) from nicotinate D-ribonucleotide: step 1/1. Functionally, catalyzes the reversible adenylation of nicotinate mononucleotide (NaMN) to nicotinic acid adenine dinucleotide (NaAD). This chain is Probable nicotinate-nucleotide adenylyltransferase, found in Bacteroides thetaiotaomicron (strain ATCC 29148 / DSM 2079 / JCM 5827 / CCUG 10774 / NCTC 10582 / VPI-5482 / E50).